The chain runs to 389 residues: Dual-specificity RNA methyltransferase RlmN (389 aa).

Catalysis depends on Glu-110, which acts as the Proton acceptor. Residues 116–355 (EKDRATLCVS…TIVRKTRGDD (240 aa)) enclose the Radical SAM core domain. A disulfide bridge links Cys-123 with Cys-360. The [4Fe-4S] cluster site is built by Cys-130, Cys-134, and Cys-137. S-adenosyl-L-methionine is bound by residues 184–185 (GE), Ser-216, 238–240 (SLH), and Asn-317. Residue Cys-360 is the S-methylcysteine intermediate of the active site.

Belongs to the radical SAM superfamily. RlmN family. It depends on [4Fe-4S] cluster as a cofactor.

The protein resides in the cytoplasm. It carries out the reaction adenosine(2503) in 23S rRNA + 2 reduced [2Fe-2S]-[ferredoxin] + 2 S-adenosyl-L-methionine = 2-methyladenosine(2503) in 23S rRNA + 5'-deoxyadenosine + L-methionine + 2 oxidized [2Fe-2S]-[ferredoxin] + S-adenosyl-L-homocysteine. The catalysed reaction is adenosine(37) in tRNA + 2 reduced [2Fe-2S]-[ferredoxin] + 2 S-adenosyl-L-methionine = 2-methyladenosine(37) in tRNA + 5'-deoxyadenosine + L-methionine + 2 oxidized [2Fe-2S]-[ferredoxin] + S-adenosyl-L-homocysteine. Specifically methylates position 2 of adenine 2503 in 23S rRNA and position 2 of adenine 37 in tRNAs. m2A2503 modification seems to play a crucial role in the proofreading step occurring at the peptidyl transferase center and thus would serve to optimize ribosomal fidelity. The chain is Dual-specificity RNA methyltransferase RlmN from Erwinia tasmaniensis (strain DSM 17950 / CFBP 7177 / CIP 109463 / NCPPB 4357 / Et1/99).